A 401-amino-acid polypeptide reads, in one-letter code: 2,3,4,5-tetrahydropyridine-2,6-dicarboxylate N-succinyltransferase (401 aa).

Catalysis depends on Glu-269, which acts as the Acyl-anhydride intermediate. Succinyl-CoA contacts are provided by residues Arg-271, Gly-286, Ser-289, Ala-312, 327 to 328 (DA), Gly-335, and Lys-364.

It belongs to the type 2 tetrahydrodipicolinate N-succinyltransferase family. Homotrimer.

It localises to the cytoplasm. The catalysed reaction is (S)-2,3,4,5-tetrahydrodipicolinate + succinyl-CoA + H2O = (S)-2-succinylamino-6-oxoheptanedioate + CoA. It functions in the pathway amino-acid biosynthesis; L-lysine biosynthesis via DAP pathway; LL-2,6-diaminopimelate from (S)-tetrahydrodipicolinate (succinylase route): step 1/3. Its function is as follows. Catalyzes the conversion of the cyclic tetrahydrodipicolinate (THDP) into the acyclic N-succinyl-L-2-amino-6-oxopimelate using succinyl-CoA. This chain is 2,3,4,5-tetrahydropyridine-2,6-dicarboxylate N-succinyltransferase, found in Helicobacter pylori (strain ATCC 700392 / 26695) (Campylobacter pylori).